The primary structure comprises 278 residues: MTAAHKLTYGQRAARFTNPAAKALLETMERKKSNLSVSVDVVKSADLLAIVDTVGPYICLIKTHVDVVEDFDSSLVTKLQALAEKHDFLIFEDRKFADIGNTVALQYSSGVHKIASWSHITNAHPVPGPSIISGLASVGQPLGRGLLLLAEMSTKGSLATGAYTEAAVQMARENRGFVIGFIAQRRMDGIGAPPGVNVEDEDFLVLTPGVGLDVKGDGMGQQYRTPKQVVQEDGCDVIIVGRGIYGKDPSKVEEIRRQAERYQAAGWAAYIERVNALV.

Residues aspartate 40, 62–64 (KTH), 93–102 (DRKFADIGNT), tyrosine 223, and arginine 242 contribute to the substrate site. The active-site Proton donor is the lysine 95.

Belongs to the OMP decarboxylase family.

The enzyme catalyses orotidine 5'-phosphate + H(+) = UMP + CO2. The protein operates within pyrimidine metabolism; UMP biosynthesis via de novo pathway; UMP from orotate: step 2/2. This is Orotidine 5'-phosphate decarboxylase (URA1) from Schizophyllum commune (Split gill fungus).